Reading from the N-terminus, the 358-residue chain is Probable dual-specificity RNA methyltransferase RlmN 1 (358 aa).

In terms of domain architecture, Radical SAM core spans 101–326; that stretch reads MQAGGTLCIS…REKGFYTLLR (226 aa). Cysteine 108 and cysteine 337 form a disulfide bridge. Positions 115, 119, and 122 each coordinate [4Fe-4S] cluster. S-adenosyl-L-methionine is bound by residues 162 to 163, serine 194, 218 to 220, and asparagine 294; these read GE and SLN. Cysteine 337 serves as the catalytic S-methylcysteine intermediate.

Belongs to the radical SAM superfamily. RlmN family. It depends on [4Fe-4S] cluster as a cofactor.

It is found in the cytoplasm. The catalysed reaction is adenosine(2503) in 23S rRNA + 2 reduced [2Fe-2S]-[ferredoxin] + 2 S-adenosyl-L-methionine = 2-methyladenosine(2503) in 23S rRNA + 5'-deoxyadenosine + L-methionine + 2 oxidized [2Fe-2S]-[ferredoxin] + S-adenosyl-L-homocysteine. The enzyme catalyses adenosine(37) in tRNA + 2 reduced [2Fe-2S]-[ferredoxin] + 2 S-adenosyl-L-methionine = 2-methyladenosine(37) in tRNA + 5'-deoxyadenosine + L-methionine + 2 oxidized [2Fe-2S]-[ferredoxin] + S-adenosyl-L-homocysteine. Specifically methylates position 2 of adenine 2503 in 23S rRNA and position 2 of adenine 37 in tRNAs. The sequence is that of Probable dual-specificity RNA methyltransferase RlmN 1 from Protochlamydia amoebophila (strain UWE25).